Here is a 132-residue protein sequence, read N- to C-terminus: Histone H2B.2 (132 aa).

A compositionally biased stretch (basic and acidic residues) spans methionine 1–proline 19. The disordered stretch occupies residues methionine 1–lysine 39. An N6-acetyllysine; alternate mark is found at lysine 7 and lysine 8. Glycyl lysine isopeptide (Lys-Gly) (interchain with G-Cter in SUMO); alternate cross-links involve residues lysine 7 and lysine 8. Serine 11 is subject to Phosphoserine. Lysine 12 bears the N6-acetyllysine mark. Lysine 17 carries the N6-acetyllysine; alternate modification. Lysine 17 participates in a covalent cross-link: Glycyl lysine isopeptide (Lys-Gly) (interchain with G-Cter in SUMO); alternate. Lysine 18 participates in a covalent cross-link: Glycyl lysine isopeptide (Lys-Gly) (interchain with G-Cter in SUMO). Residue lysine 125 forms a Glycyl lysine isopeptide (Lys-Gly) (interchain with G-Cter in ubiquitin) linkage.

It belongs to the histone H2B family. In terms of assembly, the nucleosome is a histone octamer containing two molecules each of H2A, H2B, H3 and H4 assembled in one H3-H4 heterotetramer and two H2A-H2B heterodimers. The octamer wraps approximately 147 bp of DNA. Post-translationally, monoubiquitinated by the UBC2-BRE1 complex to form H2BK123ub1. H2BK123ub1 gives a specific tag for epigenetic transcriptional activation and is also prerequisite for H3K4me and H3K79me formation. H2BK123ub1 also modulates the formation of double-strand breaks during meiosis and is a prerequisite for DNA-damage checkpoint activation. Phosphorylated by STE20 to form H2BS10ph during progression through meiotic prophase. May be correlated with chromosome condensation. In terms of processing, acetylated by GCN5 to form H2BK11ac and H2BK16ac. H2BK16ac can also be formed by ESA1. Acetylation of N-terminal lysines and particularly formation of H2BK11acK16ac has a positive effect on transcription. Post-translationally, sumoylation to form H2BK6su or H2BK7su, and probably also H2BK16su or H2BK17su, occurs preferentially near the telomeres and represses gene transcription.

The protein localises to the nucleus. It localises to the chromosome. Its function is as follows. Core component of nucleosome. Nucleosomes wrap and compact DNA into chromatin, limiting DNA accessibility to the cellular machineries which require DNA as a template. Histones thereby play a central role in transcription regulation, DNA repair, DNA replication and chromosomal stability. DNA accessibility is regulated via a complex set of post-translational modifications of histones, also called histone code, and nucleosome remodeling. In Kluyveromyces lactis (strain ATCC 8585 / CBS 2359 / DSM 70799 / NBRC 1267 / NRRL Y-1140 / WM37) (Yeast), this protein is Histone H2B.2 (HTB1).